Consider the following 468-residue polypeptide: ATP synthase subunit beta (468 aa).

ATP is bound at residue 155-162; that stretch reads GGAGVGKT.

This sequence belongs to the ATPase alpha/beta chains family. As to quaternary structure, F-type ATPases have 2 components, CF(1) - the catalytic core - and CF(0) - the membrane proton channel. CF(1) has five subunits: alpha(3), beta(3), gamma(1), delta(1), epsilon(1). CF(0) has three main subunits: a(1), b(2) and c(9-12). The alpha and beta chains form an alternating ring which encloses part of the gamma chain. CF(1) is attached to CF(0) by a central stalk formed by the gamma and epsilon chains, while a peripheral stalk is formed by the delta and b chains.

It localises to the cell membrane. It carries out the reaction ATP + H2O + 4 H(+)(in) = ADP + phosphate + 5 H(+)(out). In terms of biological role, produces ATP from ADP in the presence of a proton gradient across the membrane. The catalytic sites are hosted primarily by the beta subunits. This chain is ATP synthase subunit beta, found in Streptococcus equi subsp. zooepidemicus (strain H70).